The sequence spans 338 residues: Probable O-antigen biosynthesis glycosyltransferase WbiN (338 aa).

It belongs to the glycosyltransferase group 1 family. Glycosyltransferase 4 subfamily.

The catalysed reaction is N-acetyl-alpha-D-galactosaminyl-di-trans,octa-cis-undecaprenyl diphosphate + UDP-N-acetyl-alpha-D-galactosamine = alpha-D-GalNAc-(1-&gt;3)-alpha-D-GalNAc-di-trans,octa-cis-undecaprenyl diphosphate + UDP + H(+). The protein operates within bacterial outer membrane biogenesis; LPS O-antigen biosynthesis. Involved in the assembly of the O-repeating unit during O-antigen biosynthesis. The chain is Probable O-antigen biosynthesis glycosyltransferase WbiN from Escherichia coli.